The sequence spans 178 residues: Deoxycytidylate deaminase (178 aa).

The CMP/dCMP-type deaminase domain occupies 14–146 (EWPEYFMAVA…EATAARLLFD (133 aa)). His84 contacts Zn(2+). Catalysis depends on Glu86, which acts as the Proton donor. Cys110 and Cys113 together coordinate Zn(2+). Ser174 is modified (phosphoserine).

This sequence belongs to the cytidine and deoxycytidylate deaminase family. In terms of assembly, homohexamer. The cofactor is Zn(2+).

The catalysed reaction is dCMP + H2O + H(+) = dUMP + NH4(+). It catalyses the reaction 5-hydroxymethyl-dCMP + H2O + H(+) = 5-hydroxymethyl-dUMP + NH4(+). Its activity is regulated as follows. Allosteric enzyme whose activity is greatly influenced by the end products of its metabolic pathway, dCTP and dTTP. Catalyzes the deamination of dCMP to dUMP, providing the nucleoside monophosphate substrate for the thymidylate synthase/TYMS. Also, part of a nucleotide salvage pathway that eliminates epigenetically modified 5-hydroxymethyl-dCMP (hmdCMP) in a two-step process entailing deamination to cytotoxic 5-hydroxymethyl-dUMP (hmdUMP), followed by its hydrolysis into 5-hydroxymethyluracil (hmU) and 2-deoxy-D-ribose 5-phosphate (deoxyribosephosphate). Catalyzes the first step in that pathway, the deamination of 5-hydroxymethyl-dCMP (hmdCMP). This is Deoxycytidylate deaminase from Pongo abelii (Sumatran orangutan).